A 123-amino-acid chain; its full sequence is Small ribosomal subunit protein bS6 (123 aa).

The interval 102 to 123 is disordered; it reads MLKQKEERAPRREAEAKEFAAE. Over residues 104–123 the composition is skewed to basic and acidic residues; it reads KQKEERAPRREAEAKEFAAE.

It belongs to the bacterial ribosomal protein bS6 family.

Binds together with bS18 to 16S ribosomal RNA. The sequence is that of Small ribosomal subunit protein bS6 from Vibrio vulnificus (strain CMCP6).